The sequence spans 893 residues: Desmocollin-1 (893 aa).

Residues 1–29 (MAVASAAPGSIFWKQLLFSLLVLILFCDA) form the signal peptide. A propeptide spanning residues 30–132 (CQKISLQVPS…KDAVLRRTKR (103 aa)) is cleaved from the precursor. Cadherin domains lie at 133–240 (RWAP…APYF), 241–352 (ENKL…APYF), 353–470 (TETS…GPEC), 471–574 (QPPV…DHPP), and 575–682 (QIKQ…LSRE). Over 133–692 (RWAPIPCSLM…AALANVFLGK (560 aa)) the chain is Extracellular. N-linked (GlcNAc...) asparagine glycosylation is present at N163. T383 carries the phosphothreonine modification. N-linked (GlcNAc...) asparagine glycans are attached at residues N398 and N545. Residues 693–715 (WAILAMVLGSVLLLCILFTCFCV) traverse the membrane as a helical segment. Residues 716–893 (TVKKTVKKCF…RTLAKTCVKK (178 aa)) are Cytoplasmic-facing.

In terms of assembly, binds to JUP/plakoglobin. Post-translationally, isoform 1A is phosphorylated on a serine but isoform 1B is not. In terms of tissue distribution, epidermis and weakly in tongue papillae.

The protein localises to the cell membrane. Its subcellular location is the cell junction. It is found in the desmosome. In terms of biological role, a component of desmosome cell-cell junctions which are required for positive regulation of cellular adhesion. Required for desmosome adhesion strength between the granular layers of the epidermis, as a result moderates epidermal proliferation and differentiation. Is therefore required to maintain postnatal epidermal barrier function and normal hair follicle morphology into adulthood. The sequence is that of Desmocollin-1 (DSC1) from Bos taurus (Bovine).